The sequence spans 286 residues: 4-hydroxybenzoate octaprenyltransferase (286 aa).

7 consecutive transmembrane segments (helical) span residues 21-40 (GTLL…AGGM), 95-115 (ILFV…NGLV), 142-162 (FLGI…TGEV), 167-187 (WWLF…YAMV), 210-230 (QIIG…GWSA), 235-255 (LYGL…MLIF), and 266-286 (FLNN…DYLI).

The protein belongs to the UbiA prenyltransferase family. Mg(2+) is required as a cofactor.

The protein resides in the cell inner membrane. The enzyme catalyses all-trans-octaprenyl diphosphate + 4-hydroxybenzoate = 4-hydroxy-3-(all-trans-octaprenyl)benzoate + diphosphate. Its pathway is cofactor biosynthesis; ubiquinone biosynthesis. In terms of biological role, catalyzes the prenylation of para-hydroxybenzoate (PHB) with an all-trans polyprenyl group. Mediates the second step in the final reaction sequence of ubiquinone-8 (UQ-8) biosynthesis, which is the condensation of the polyisoprenoid side chain with PHB, generating the first membrane-bound Q intermediate 3-octaprenyl-4-hydroxybenzoate. The sequence is that of 4-hydroxybenzoate octaprenyltransferase from Shewanella baltica (strain OS185).